Here is a 347-residue protein sequence, read N- to C-terminus: Homocysteine S-methyltransferase 3 (347 aa).

One can recognise a Hcy-binding domain in the interval 12–333 (LMTDFLEKCG…NTIRAIAKVL (322 aa)). The Zn(2+) site is built by C251, C318, and C319.

As to quaternary structure, monomer. Zn(2+) is required as a cofactor. In terms of tissue distribution, expressed predominantly in rosette leaves. Expressed in roots, cauline leaves and developing seeds.

The catalysed reaction is S-methyl-L-methionine + L-homocysteine = 2 L-methionine + H(+). In terms of biological role, catalyzes methyl transfer from S-methylmethionine (SMM) to adenosyl-L-homocysteine (AdoMet). SMM degradation (by HMT-1, HMT-2 and HMT-3) and biosynthesis (by MMT1) constitute the SMM cycle in plants, which is probably required to achieve short term control of AdoMet level. The chain is Homocysteine S-methyltransferase 3 (HMT3) from Arabidopsis thaliana (Mouse-ear cress).